Here is a 311-residue protein sequence, read N- to C-terminus: L-lactate dehydrogenase 2 (311 aa).

NAD(+) contacts are provided by valine 14, aspartate 35, and arginine 40. Substrate contacts are provided by residues arginine 90 and 122–125 (NPCD). Residues 120 to 122 (ATN) and threonine 145 contribute to the NAD(+) site. 150–153 (DTTR) contacts substrate. Histidine 177 acts as the Proton acceptor in catalysis. Residue threonine 230 participates in substrate binding.

Belongs to the LDH/MDH superfamily. LDH family. Homotetramer.

Its subcellular location is the cytoplasm. The enzyme catalyses (S)-lactate + NAD(+) = pyruvate + NADH + H(+). It participates in fermentation; pyruvate fermentation to lactate; (S)-lactate from pyruvate: step 1/1. Functionally, catalyzes the conversion of lactate to pyruvate. This Listeria monocytogenes serovar 1/2a (strain ATCC BAA-679 / EGD-e) protein is L-lactate dehydrogenase 2.